A 575-amino-acid polypeptide reads, in one-letter code: Intermediate filament protein ifd-1 (575 aa).

The head stretch occupies residues 1–56 (MSKLNPRVAHNPVLSRIIESGRTNLPSGITSAGSLSAYAQAAAVTIRDNRDREKRE). The IF rod domain occupies 53–406 (EKREIADLNN…KLMEQAENLR (354 aa)). A coil 1A region spans residues 57-88 (IADLNNRLARYVEKVRFLEAQNRVLENDIGLF). A linker 1 region spans residues 89–102 (RQAAHIHTGKVRDY). A coil 1B region spans residues 103–240 (YDAEKTSLAT…STHEIAIREE (138 aa)). Positions 241-258 (INKARRDSTDKNREFFHR) are linker 12. Positions 259-408 (ELHMSMKEIR…MEQAENLRTS (150 aa)) are coil 2. The segment at 409–572 (YQSDFVIDTP…DEVGWYAHVS (164 aa)) is tail. The 117-residue stretch at 459–575 (NTQQFRSYGK…GWYAHVSYSH (117 aa)) folds into the LTD domain.

It belongs to the intermediate filament family.

It localises to the cytoplasm. In terms of biological role, cytoplasmic intermediate filaments provide mechanical strength to cells. Not essential protein. This is Intermediate filament protein ifd-1 from Caenorhabditis elegans.